The sequence spans 162 residues: NAD(P)H-quinone oxidoreductase subunit N (162 aa).

It belongs to the complex I NdhN subunit family. NDH-1 can be composed of about 15 different subunits; different subcomplexes with different compositions have been identified which probably have different functions.

Its subcellular location is the cellular thylakoid membrane. The enzyme catalyses a plastoquinone + NADH + (n+1) H(+)(in) = a plastoquinol + NAD(+) + n H(+)(out). The catalysed reaction is a plastoquinone + NADPH + (n+1) H(+)(in) = a plastoquinol + NADP(+) + n H(+)(out). Its function is as follows. NDH-1 shuttles electrons from an unknown electron donor, via FMN and iron-sulfur (Fe-S) centers, to quinones in the respiratory and/or the photosynthetic chain. The immediate electron acceptor for the enzyme in this species is believed to be plastoquinone. Couples the redox reaction to proton translocation, and thus conserves the redox energy in a proton gradient. Cyanobacterial NDH-1 also plays a role in inorganic carbon-concentration. This Nostoc sp. (strain PCC 7120 / SAG 25.82 / UTEX 2576) protein is NAD(P)H-quinone oxidoreductase subunit N.